A 528-amino-acid polypeptide reads, in one-letter code: Phosphoenolpyruvate carboxykinase (ATP) (528 aa).

Substrate-binding residues include R56, Y192, and K198. ATP contacts are provided by residues K198, H217, and 233–241; that span reads GLSGTGKTT. Mn(2+) contacts are provided by K198 and H217. Residue D254 participates in Mn(2+) binding. Positions 282, 319, and 444 each coordinate ATP. R319 contributes to the substrate binding site.

This sequence belongs to the phosphoenolpyruvate carboxykinase (ATP) family. It depends on Mn(2+) as a cofactor.

It localises to the cytoplasm. The catalysed reaction is oxaloacetate + ATP = phosphoenolpyruvate + ADP + CO2. It functions in the pathway carbohydrate biosynthesis; gluconeogenesis. Its function is as follows. Involved in the gluconeogenesis. Catalyzes the conversion of oxaloacetate (OAA) to phosphoenolpyruvate (PEP) through direct phosphoryl transfer between the nucleoside triphosphate and OAA. The polypeptide is Phosphoenolpyruvate carboxykinase (ATP) (Geobacillus kaustophilus (strain HTA426)).